The sequence spans 513 residues: Alpha,alpha-trehalose-phosphate synthase [UDP-forming] (513 aa).

Position 40 is a phosphotyrosine (tyrosine 40). Residues tyrosine 104 and aspartate 158 each contribute to the D-glucose 6-phosphate site. Residues arginine 294 and lysine 299 each coordinate UDP. UDP-alpha-D-glucose is bound by residues arginine 294 and lysine 299. Arginine 332 provides a ligand contact to D-glucose 6-phosphate. 393–401 is a binding site for UDP-alpha-D-glucose; it reads DGMNLVSYE. Residue 397-401 participates in UDP binding; it reads LVSYE. A Phosphoserine modification is found at serine 503.

It belongs to the glycosyltransferase 20 family. As to quaternary structure, homomer. Component of the trehalose synthase complex that contains at least tps1, ntp1 and tpp1. Interacts with tpp1. Interacts with ntp1; the interaction is independent of stress conditions.

It localises to the cytoplasm. The protein localises to the nucleus. The enzyme catalyses D-glucose 6-phosphate + UDP-alpha-D-glucose = alpha,alpha-trehalose 6-phosphate + UDP + H(+). Its pathway is carbohydrate biosynthesis. Synthase catalytic subunit of the trehalose synthase complex that catalyzes the production of trehalose from glucose-6-phosphate and UDP-alpha-D-glucose in a two step process. The disaccharide trehalose serves as a storage carbohydrate that is mobilized during nutrient stress and spore germination. Together with ntp1, regulates the level of trehalose as a protectant for cell integrity during thermal and osmotic stress. In Schizosaccharomyces pombe (strain 972 / ATCC 24843) (Fission yeast), this protein is Alpha,alpha-trehalose-phosphate synthase [UDP-forming].